The sequence spans 279 residues: MHKSVQDIVNMKKGKKKVSVITGYDYTLASLCDKAGIDVLLVGDSAGMVMLGYENTIPVTMDQMCMFTEAVSRARNNALLVADLPFMSYQASIEDAINNSGKLIKAGADAVKLEGGSIMAETISAIVDVGIPVMGHIGLQPQTTMLSQGYKVQGRTKDSAMQLIQDAKELEEAGVFSIALEMVSHEVAQIISETVSAPTIGIGSGVNCDGQVLVVQDLLGMYDKIKPKFAKRYMNLSEDIVKSLEDYKNDVESNTFPAEENWFSMDPEELKKLREQIGS.

2 residues coordinate Mg(2+): aspartate 44 and aspartate 83. 3-methyl-2-oxobutanoate is bound by residues 44–45 (DS), aspartate 83, and lysine 112. A Mg(2+)-binding site is contributed by glutamate 114. The active-site Proton acceptor is glutamate 181.

The protein belongs to the PanB family. Homodecamer; pentamer of dimers. Mg(2+) serves as cofactor.

The protein resides in the cytoplasm. It carries out the reaction 3-methyl-2-oxobutanoate + (6R)-5,10-methylene-5,6,7,8-tetrahydrofolate + H2O = 2-dehydropantoate + (6S)-5,6,7,8-tetrahydrofolate. It participates in cofactor biosynthesis; coenzyme A biosynthesis. Its function is as follows. Catalyzes the reversible reaction in which hydroxymethyl group from 5,10-methylenetetrahydrofolate is transferred onto alpha-ketoisovalerate to form ketopantoate. The chain is 3-methyl-2-oxobutanoate hydroxymethyltransferase from Nitrosopumilus maritimus (strain SCM1).